The chain runs to 287 residues: Large ribosomal subunit protein uL2 (287 aa).

Positions 221–287 (RGSVMNPCDH…SKRSRGGRDS (67 aa)) are disordered. Over residues 258–287 (KTRKRNKPSNKFVLRKRRKTSKRSRGGRDS) the composition is skewed to basic residues.

Belongs to the universal ribosomal protein uL2 family. Part of the 50S ribosomal subunit. Forms a bridge to the 30S subunit in the 70S ribosome.

Functionally, one of the primary rRNA binding proteins. Required for association of the 30S and 50S subunits to form the 70S ribosome, for tRNA binding and peptide bond formation. It has been suggested to have peptidyltransferase activity; this is somewhat controversial. Makes several contacts with the 16S rRNA in the 70S ribosome. This is Large ribosomal subunit protein uL2 from Synechococcus sp. (strain CC9311).